A 498-amino-acid polypeptide reads, in one-letter code: ATP synthase subunit beta, chloroplastic (498 aa).

An ATP-binding site is contributed by 172–179; that stretch reads GGAGVGKT.

It belongs to the ATPase alpha/beta chains family. In terms of assembly, F-type ATPases have 2 components, CF(1) - the catalytic core - and CF(0) - the membrane proton channel. CF(1) has five subunits: alpha(3), beta(3), gamma(1), delta(1), epsilon(1). CF(0) has four main subunits: a(1), b(1), b'(1) and c(9-12).

The protein resides in the plastid. The protein localises to the chloroplast thylakoid membrane. It catalyses the reaction ATP + H2O + 4 H(+)(in) = ADP + phosphate + 5 H(+)(out). Functionally, produces ATP from ADP in the presence of a proton gradient across the membrane. The catalytic sites are hosted primarily by the beta subunits. The chain is ATP synthase subunit beta, chloroplastic from Beta vulgaris (Sugar beet).